The primary structure comprises 125 residues: SOSS complex subunit C homolog B (125 aa).

2 disordered regions span residues 44-73 (PAPQ…RAAF) and 105-125 (PATP…NNPK).

Belongs to the SOSS-C family.

This Drosophila willistoni (Fruit fly) protein is SOSS complex subunit C homolog B.